Reading from the N-terminus, the 208-residue chain is Coiled-coil domain-containing protein 25 (208 aa).

Residues 1–105 (MVFYFTSSSV…SNLKKTADMD (105 aa)) lie on the Extracellular side of the membrane. The DNA-binding stretch occupies residues 21–25 (KDKYE). N6-acetyllysine is present on Lys-23. The helical transmembrane segment at 106–122 (VGQIGFHRQKDVKIVTV) threads the bilayer. Positions 117–187 (VKIVTVEKKV…REMDELRSYS (71 aa)) form a coiled coil. The Cytoplasmic segment spans residues 123–208 (EKKVNEILNR…QDGNDSDEFM (86 aa)). The segment covering 145–184 (EAEKECRDHEERNEKKAQIQEMKRREKEEMKKKREMDELR) has biased composition (basic and acidic residues). A disordered region spans residues 145-208 (EAEKECRDHE…QDGNDSDEFM (64 aa)). Ser-204 is subject to Phosphoserine.

This sequence belongs to the CCDC25 family. As to quaternary structure, interacts (via cytoplasmic region) with ILK.

It is found in the cell membrane. The protein resides in the endomembrane system. In terms of biological role, transmembrane receptor that senses neutrophil extracellular traps (NETs) and triggers the ILK-PARVB pathway to enhance cell motility. NETs are mainly composed of DNA fibers and are released by neutrophils to bind pathogens during inflammation. Formation of NETs is also associated with cancer metastasis, NET-DNA acting as a chemotactic factor to attract cancer cells. Specifically binds NETs on its extracellular region, in particular the 8-OHdG-enriched DNA present in NETs, and recruits ILK, initiating the ILK-PARVB cascade to induce cytoskeleton rearrangement and directional migration of cells. This chain is Coiled-coil domain-containing protein 25, found in Bos taurus (Bovine).